The following is a 148-amino-acid chain: Ribosomal RNA large subunit methyltransferase H (148 aa).

S-adenosyl-L-methionine-binding positions include Leu-62, Gly-94, and 113-118 (LSLLTL).

Belongs to the RNA methyltransferase RlmH family. Homodimer.

The protein localises to the cytoplasm. It catalyses the reaction pseudouridine(1915) in 23S rRNA + S-adenosyl-L-methionine = N(3)-methylpseudouridine(1915) in 23S rRNA + S-adenosyl-L-homocysteine + H(+). Functionally, specifically methylates the pseudouridine at position 1915 (m3Psi1915) in 23S rRNA. In Deinococcus geothermalis (strain DSM 11300 / CIP 105573 / AG-3a), this protein is Ribosomal RNA large subunit methyltransferase H.